A 303-amino-acid chain; its full sequence is 2-dehydropantoate 2-reductase (303 aa).

NADP(+)-binding positions include 7–12 (GCGALG), N98, and A122. N98 contacts substrate. K176 acts as the Proton donor in catalysis. The substrate site is built by N180, N184, N194, and S244. E256 is a binding site for NADP(+).

It belongs to the ketopantoate reductase family. Monomer.

It is found in the cytoplasm. It catalyses the reaction (R)-pantoate + NADP(+) = 2-dehydropantoate + NADPH + H(+). The protein operates within cofactor biosynthesis; (R)-pantothenate biosynthesis; (R)-pantoate from 3-methyl-2-oxobutanoate: step 2/2. In terms of biological role, catalyzes the NADPH-dependent reduction of ketopantoate into pantoic acid. This is 2-dehydropantoate 2-reductase (panE) from Shigella flexneri.